A 395-amino-acid chain; its full sequence is Probable hercynylcysteine sulfoxide lyase (395 aa).

The tract at residues 1-21 (MQDEAMRRSGANSPAGDSLAD) is disordered. At Lys220 the chain carries N6-(pyridoxal phosphate)lysine.

It belongs to the class-V pyridoxal-phosphate-dependent aminotransferase family. EgtE subfamily. Pyridoxal 5'-phosphate serves as cofactor.

It carries out the reaction S-(hercyn-2-yl)-L-cysteine S-oxide + AH2 + H(+) = ergothioneine + pyruvate + A + NH4(+). Its pathway is amino-acid biosynthesis; ergothioneine biosynthesis. Probably catalyzes the conversion of hercynylcysteine sulfoxide to ergothioneine. ERG is one of the major redox buffers which protects bacteria against redox stressors and antibiotics; loss of ERG or mycothiol (MSH, the other major redox buffer in this bacteria) leads to respiratory alterations and bioenergetic deficiencies that negatively impact virulence. The sequence is that of Probable hercynylcysteine sulfoxide lyase from Mycobacterium tuberculosis (strain CDC 1551 / Oshkosh).